Here is a 591-residue protein sequence, read N- to C-terminus: NADPH oxidase 1 (591 aa).

Topologically, residues methionine 1 to histidine 36 are cytoplasmic. The helical transmembrane segment at tryptophan 37 to leucine 59 threads the bilayer. Residues asparagine 60–glutamate 72 are Extracellular-facing. The helical transmembrane segment at isoleucine 73 to isoleucine 97 threads the bilayer. The Ferric oxidoreductase domain maps to arginine 82–tyrosine 316. The Cytoplasmic portion of the chain corresponds to proline 98 to lysine 130. 2 residues coordinate heme: histidine 129 and histidine 143. The chain crosses the membrane as a helical span at residues leucine 131–phenylalanine 151. Residues glutamate 152–alanine 195 lie on the Extracellular side of the membrane. An N-linked (GlcNAc...) asparagine glycan is attached at asparagine 189. Residues alanine 196–valine 216 form a helical membrane-spanning segment. Residues threonine 217–threonine 234 are Cytoplasmic-facing. Residues histidine 235–arginine 255 form a helical membrane-spanning segment. Heme-binding residues include histidine 236 and histidine 248. Over glycine 256–glutamate 423 the chain is Extracellular. Residue asparagine 269 is glycosylated (N-linked (GlcNAc...) asparagine). One can recognise an FAD-binding FR-type domain in the interval arginine 317 to aspartate 418. Histidine 365 to serine 371 contacts FAD. The helical transmembrane segment at valine 424 to isoleucine 444 threads the bilayer. The tract at residues valine 424–leucine 563 is interaction with NOXO1. The Cytoplasmic segment spans residues tryptophan 445–phenylalanine 591. Threonine 457 carries the phosphothreonine modification.

NOX1, NOXA1, NOXO1, RAC1 and CYBA forms a functional multimeric complex supporting ROS production. Interacts with NOXO1. Interacts (via FAD-binding FR-type domain) with ARHGEF7 (via PH domain). Interacts with NOXA1. Requires FAD as cofactor. Post-translationally, phosphorylation at Thr-457 mediated by PKC/PRKBC positively regulates its interaction with NOXA1 and enzyme activity. As to expression, expressed in colon and vascular smooth muscle cells (VSMC).

Its subcellular location is the cell projection. It is found in the invadopodium membrane. It localises to the cell membrane. The enzyme catalyses NADPH + 2 O2 = 2 superoxide + NADP(+) + H(+). With respect to regulation, the oxidase activity is potentiated by NOXA1 and NOXO1. Functionally, NADPH oxidase that catalyzes the generation of superoxide from molecular oxygen utilizing NADPH as an electron donor. This is NADPH oxidase 1 (Nox1) from Mus musculus (Mouse).